The sequence spans 571 residues: E3 ubiquitin-protein ligase RNF168 (571 aa).

Residues 16 to 55 form an RING-type zinc finger; that stretch reads CGICMEILVEPVTLPCNHTLCKPCFQSTVEKASLCCPFCR. At S70 the chain carries Phosphoserine. The short motif at 110–128 is the LR motif 1 element; that stretch reads LSKPGELRREYEEEISKVA. Position 134 is a phosphoserine (S134). A UMI motif motif is present at residues 143-151; that stretch reads EEYIQRLLA. 2 disordered regions span residues 151–174 and 191–292; these read AEEEEEEKRQAEKRRRAMEEQLKS and EGSI…GADS. Residues 168–191 carry the MIU motif 1 motif; that stretch reads MEEQLKSDEELARKLSIDINNFCE. Position 197 is a phosphoserine (S197). Over residues 202-214 the composition is skewed to basic and acidic residues; sequence RKSDPVTPKSEKK. K210 is covalently cross-linked (Glycyl lysine isopeptide (Lys-Gly) (interchain with G-Cter in SUMO2)). A compositionally biased stretch (polar residues) spans 231 to 242; the sequence is PKSQFGSASHSE. The span at 243–263 shows a compositional bias: basic and acidic residues; it reads AVQEVRKDSVSKDIDSSDRKS. T362 is modified (phosphothreonine). Disordered regions lie at residues 390 to 422 and 459 to 560; these read NQESSFEAVKDPCFSAKRRKVSPESSPDQEETE and KEQM…ISQK. 3 positions are modified to phosphoserine: S411, S414, and S415. Residues 439–462 carry the MIU motif 2 motif; it reads RHKQEEQDRLLALQLQKEVDKEQM. Residues 466-477 carry the LR motif 2 motif; it reads RQKGSPDEYHLR. At S470 the chain carries Phosphoserine. Residues 508-519 show a composition bias toward basic and acidic residues; that stretch reads PTPERGSRDKNR. 2 stretches are compositionally biased toward polar residues: residues 520-530 and 549-560; these read QVSLKMQLKQS and SAHSLQPSISQK. Residue K528 forms a Glycyl lysine isopeptide (Lys-Gly) (interchain with G-Cter in SUMO2) linkage.

The protein belongs to the RNF168 family. In terms of assembly, monomer. Interacts with UBE2N/UBC13. Sumoylated with SUMO1 by PIAS4 in response to double-strand breaks (DSBs). In terms of processing, ubiquitinated.

The protein localises to the nucleus. It catalyses the reaction S-ubiquitinyl-[E2 ubiquitin-conjugating enzyme]-L-cysteine + [acceptor protein]-L-lysine = [E2 ubiquitin-conjugating enzyme]-L-cysteine + N(6)-ubiquitinyl-[acceptor protein]-L-lysine.. It functions in the pathway protein modification; protein ubiquitination. In terms of biological role, E3 ubiquitin-protein ligase required for accumulation of repair proteins to sites of DNA damage. Acts with UBE2N/UBC13 to amplify the RNF8-dependent histone ubiquitination. Recruited to sites of DNA damage at double-strand breaks (DSBs) by binding to ubiquitinated histone H2A and H2AX and amplifies the RNF8-dependent H2A ubiquitination, promoting the formation of 'Lys-63'-linked ubiquitin conjugates. This leads to concentrate ubiquitinated histones H2A and H2AX at DNA lesions to the threshold required for recruitment of TP53BP1 and BRCA1. Also recruited at DNA interstrand cross-links (ICLs) sites and promotes accumulation of 'Lys-63'-linked ubiquitination of histones H2A and H2AX, leading to recruitment of FAAP20/C1orf86 and Fanconi anemia (FA) complex, followed by interstrand cross-link repair. H2A ubiquitination also mediates the ATM-dependent transcriptional silencing at regions flanking DSBs in cis, a mechanism to avoid collision between transcription and repair intermediates. Also involved in class switch recombination in immune system, via its role in regulation of DSBs repair. Following DNA damage, promotes the ubiquitination and degradation of JMJD2A/KDM4A in collaboration with RNF8, leading to unmask H4K20me2 mark and promote the recruitment of TP53BP1 at DNA damage sites. Not able to initiate 'Lys-63'-linked ubiquitination in vitro; possibly due to partial occlusion of the UBE2N/UBC13-binding region. Catalyzes monoubiquitination of 'Lys-13' and 'Lys-15' of nucleosomal histone H2A (H2AK13Ub and H2AK15Ub, respectively). The sequence is that of E3 ubiquitin-protein ligase RNF168 from Homo sapiens (Human).